The chain runs to 383 residues: Mannan endo-1,4-beta-mannosidase A (383 aa).

The first 18 residues, 1–18 (MKFSQALLSLASLALAAA), serve as a signal peptide directing secretion. N75 carries N-linked (GlcNAc...) asparagine glycosylation. A substrate-binding site is contributed by W97. N199 carries an N-linked (GlcNAc...) asparagine glycan. Substrate contacts are provided by residues N210 and 211-213 (EPR). E211 acts as the Proton donor/acceptor in catalysis. A disulfide bridge links C214 with C217. Substrate is bound by residues Y279 and W283. A disulfide bond links C301 and C308. E312 functions as the Nucleophile in the catalytic mechanism. A disulfide bridge connects residues C320 and C369. N-linked (GlcNAc...) asparagine glycosylation occurs at N332. W342 serves as a coordination point for substrate.

The protein belongs to the glycosyl hydrolase 5 (cellulase A) family. As to quaternary structure, monomer.

The protein localises to the secreted. The catalysed reaction is Random hydrolysis of (1-&gt;4)-beta-D-mannosidic linkages in mannans, galactomannans and glucomannans.. Functionally, endo-1,4-mannanase that catalyzes the random hydrolysis of (1-&gt;4)-beta-D-mannosidic linkages in mannans and heteromannans. It is a crucial enzyme for depolymerization of seed galactomannans and wood galactoglucomannans. Active against locust bean gum and gum guar. Also has transglycosylation activity. The sequence is that of Mannan endo-1,4-beta-mannosidase A (manA) from Emericella nidulans (strain FGSC A4 / ATCC 38163 / CBS 112.46 / NRRL 194 / M139) (Aspergillus nidulans).